The primary structure comprises 111 residues: Cyclin-dependent protein kinase inhibitor SMR2 (111 aa).

The segment at 1–66 is disordered; sequence MSKLLETLEE…PPPRKRPREI (66 aa). The segment covering 10–35 has biased composition (basic and acidic residues); it reads EEKTVEQKPRSQEEEDHQDSSKKEEL.

Interacts with CYCD2-1. Interacts with CDKB1-1. In terms of tissue distribution, expressed at low levels in roots and stems. Expressed in the root vascular tissue.

It is found in the nucleus. Functionally, cyclin-dependent protein kinase (CDK) inhibitor that restricts cell proliferation and cooperates with SIM and SMR1 to promote endoreplication during leaf development. The sequence is that of Cyclin-dependent protein kinase inhibitor SMR2 from Arabidopsis thaliana (Mouse-ear cress).